Consider the following 393-residue polypeptide: Chorismate synthase (393 aa).

Residues arginine 39 and arginine 45 each contribute to the NADP(+) site. FMN is bound by residues 133–135, 256–257, glycine 301, 316–320, and arginine 342; these read RSS, NA, and KPIPT.

The protein belongs to the chorismate synthase family. Homotetramer. The cofactor is FMNH2.

The enzyme catalyses 5-O-(1-carboxyvinyl)-3-phosphoshikimate = chorismate + phosphate. Its pathway is metabolic intermediate biosynthesis; chorismate biosynthesis; chorismate from D-erythrose 4-phosphate and phosphoenolpyruvate: step 7/7. In terms of biological role, catalyzes the anti-1,4-elimination of the C-3 phosphate and the C-6 proR hydrogen from 5-enolpyruvylshikimate-3-phosphate (EPSP) to yield chorismate, which is the branch point compound that serves as the starting substrate for the three terminal pathways of aromatic amino acid biosynthesis. This reaction introduces a second double bond into the aromatic ring system. The polypeptide is Chorismate synthase (Lysinibacillus sphaericus (strain C3-41)).